Reading from the N-terminus, the 372-residue chain is MKFVDEATIEVIAGKGGNGVASFRREKFIPRGGPDGGDGGRGGSIFAVADRNINTLIDFRYARLHRAKNGENGRGSDQYGAAAPDITLRVPVGTVVHDADTGEVLFDLNRHGETVTLAAGGQGGMGNIHFKSSVNRAPRQWTPGKEGEQRRLRLELKVLADVGLLGLPNAGKSTLISRISNARPKIADYPFTTLHPNLGVVRTSPSRSFVVADIPGLIEGASEGAGLGHLFLRHLARTRVLLHLVDVSSPDPDADPIESAVENARAIVEELRRYDPELAEKPRWLVLNKLDMVPDPASVQQRFCEAFGWTGPVFCISGLNGEGTQELIWALQDYLDAEKRKEQITQDKADGSYVHEDPRFDTTRDAPPSGKD.

Residues 1–159 (MKFVDEATIE…RRLRLELKVL (159 aa)) enclose the Obg domain. The OBG-type G domain occupies 160-336 (ADVGLLGLPN…LIWALQDYLD (177 aa)). Residues 166-173 (GLPNAGKS), 191-195 (FTTLH), 213-216 (DIPG), 288-291 (NKLD), and 317-319 (SGL) contribute to the GTP site. Mg(2+)-binding residues include Ser-173 and Thr-193. The interval 341–372 (KEQITQDKADGSYVHEDPRFDTTRDAPPSGKD) is disordered.

It belongs to the TRAFAC class OBG-HflX-like GTPase superfamily. OBG GTPase family. As to quaternary structure, monomer. Mg(2+) is required as a cofactor.

The protein resides in the cytoplasm. An essential GTPase which binds GTP, GDP and possibly (p)ppGpp with moderate affinity, with high nucleotide exchange rates and a fairly low GTP hydrolysis rate. Plays a role in control of the cell cycle, stress response, ribosome biogenesis and in those bacteria that undergo differentiation, in morphogenesis control. The chain is GTPase Obg from Bordetella avium (strain 197N).